Here is a 62-residue protein sequence, read N- to C-terminus: Phyllokinin-1 (62 aa).

An N-terminal signal peptide occupies residues 1-19; it reads MSFLKKSLFLVLFLGLVSS. A propeptide spanning residues 20–48 is cleaved from the precursor; that stretch reads SICEEEKRETEEEENEDEIEEESEEKKRE. Residues 22 to 62 form a disordered region; the sequence is CEEEKRETEEEENEDEIEEESEEKKREDPERPPGFTPFRVY. Over residues 30–42 the composition is skewed to acidic residues; it reads EEEENEDEIEEES. A compositionally biased stretch (basic and acidic residues) spans 43 to 52; sequence EEKKREDPER. A Sulfotyrosine; partial modification is found at Tyr-62.

The protein belongs to the frog skin active peptide (FSAP) family. Bradykinin-related peptide subfamily. Post-translationally, asp,Pro,Glu-[Thr6,Val10]-phyllokinin and [Thr6,Val10]-phyllokinin occur in sulfated and nonsulfated forms. [Thr6]-bradykinin and Des-Arg-[Thr6]-bradykinin are nonsulfated. In terms of tissue distribution, expressed by the skin glands.

The protein localises to the secreted. Functionally, inhibits ACE with a Ki of 1.6 uM, and targets B2 bradykinin receptor (BDKRB2). Provokes contraction of smooth muscle preparation (ileum). In vivo, induces an early hyperalgesic effects in living rats after intraplantar injection. In Pithecopus azureus (Orange-legged monkey tree frog), this protein is Phyllokinin-1.